The primary structure comprises 433 residues: Serine--tRNA ligase (433 aa).

An L-serine-binding site is contributed by 235–237 (TSE). Residue 266–268 (RSE) participates in ATP binding. Residue glutamate 289 participates in L-serine binding. 353–356 (EISS) contributes to the ATP binding site. L-serine is bound at residue serine 388.

This sequence belongs to the class-II aminoacyl-tRNA synthetase family. Type-1 seryl-tRNA synthetase subfamily. Homodimer. The tRNA molecule binds across the dimer.

It localises to the cytoplasm. The catalysed reaction is tRNA(Ser) + L-serine + ATP = L-seryl-tRNA(Ser) + AMP + diphosphate + H(+). It catalyses the reaction tRNA(Sec) + L-serine + ATP = L-seryl-tRNA(Sec) + AMP + diphosphate + H(+). It participates in aminoacyl-tRNA biosynthesis; selenocysteinyl-tRNA(Sec) biosynthesis; L-seryl-tRNA(Sec) from L-serine and tRNA(Sec): step 1/1. In terms of biological role, catalyzes the attachment of serine to tRNA(Ser). Is also able to aminoacylate tRNA(Sec) with serine, to form the misacylated tRNA L-seryl-tRNA(Sec), which will be further converted into selenocysteinyl-tRNA(Sec). The chain is Serine--tRNA ligase from Burkholderia ambifaria (strain ATCC BAA-244 / DSM 16087 / CCUG 44356 / LMG 19182 / AMMD) (Burkholderia cepacia (strain AMMD)).